Consider the following 66-residue polypeptide: Beta-defensin 107A (66 aa).

Positions 1-22 (MKIFFFIFAALFLLAQIFQART) are cleaved as a signal peptide. Intrachain disulfides connect C37-C51 and C41-C60.

Belongs to the beta-defensin family.

The protein resides in the secreted. Has antibacterial activity. This is Beta-defensin 107A (DEFB107A) from Gorilla gorilla gorilla (Western lowland gorilla).